The sequence spans 84 residues: Putative ribosomal RNA large subunit methyltransferase H 2 (84 aa).

Residues Gly-33 and 52 to 57 contribute to the S-adenosyl-L-methionine site; that span reads FSKMTF.

It belongs to the RNA methyltransferase RlmH family. In terms of assembly, homodimer.

The protein localises to the cytoplasm. The enzyme catalyses pseudouridine(1915) in 23S rRNA + S-adenosyl-L-methionine = N(3)-methylpseudouridine(1915) in 23S rRNA + S-adenosyl-L-homocysteine + H(+). In terms of biological role, specifically methylates the pseudouridine at position 1915 (m3Psi1915) in 23S rRNA. This Clostridium perfringens (strain SM101 / Type A) protein is Putative ribosomal RNA large subunit methyltransferase H 2 (rlmH2).